Consider the following 138-residue polypeptide: 1,4-dihydroxy-2-naphthoyl-CoA hydrolase (138 aa).

Asp13 is a catalytic residue.

This sequence belongs to the 4-hydroxybenzoyl-CoA thioesterase family. DHNA-CoA hydrolase subfamily.

The enzyme catalyses 1,4-dihydroxy-2-naphthoyl-CoA + H2O = 1,4-dihydroxy-2-naphthoate + CoA + H(+). It functions in the pathway cofactor biosynthesis; phylloquinone biosynthesis. Its pathway is quinol/quinone metabolism; 1,4-dihydroxy-2-naphthoate biosynthesis; 1,4-dihydroxy-2-naphthoate from chorismate: step 7/7. Functionally, catalyzes the hydrolysis of 1,4-dihydroxy-2-naphthoyl-CoA (DHNA-CoA) to 1,4-dihydroxy-2-naphthoate (DHNA), a reaction involved in phylloquinone (vitamin K1) biosynthesis. In Microcystis aeruginosa (strain NIES-843 / IAM M-2473), this protein is 1,4-dihydroxy-2-naphthoyl-CoA hydrolase.